The sequence spans 231 residues: Tol-Pal system protein TolQ (231 aa).

3 consecutive transmembrane segments (helical) span residues 20 to 40 (IVVQ…WIMI), 134 to 154 (FLAT…VWGI), and 176 to 196 (IAEA…AVIA).

The protein belongs to the ExbB/TolQ family. In terms of assembly, the Tol-Pal system is composed of five core proteins: the inner membrane proteins TolA, TolQ and TolR, the periplasmic protein TolB and the outer membrane protein Pal. They form a network linking the inner and outer membranes and the peptidoglycan layer.

It is found in the cell inner membrane. Functionally, part of the Tol-Pal system, which plays a role in outer membrane invagination during cell division and is important for maintaining outer membrane integrity. The chain is Tol-Pal system protein TolQ from Pseudomonas aeruginosa (strain ATCC 15692 / DSM 22644 / CIP 104116 / JCM 14847 / LMG 12228 / 1C / PRS 101 / PAO1).